The chain runs to 293 residues: 4-hydroxybenzoate octaprenyltransferase (293 aa).

The next 8 helical transmembrane spans lie at 19–39 (PIGI…ASNG), 43–63 (WLIL…GCVV), 95–115 (LLAA…NALV), 135–155 (FFAI…PMSY), 158–178 (LWGE…FWAI), 209–229 (LTAI…VGAL), 231–251 (DFSG…VYHL), and 266–286 (FLHN…HFLL).

It belongs to the UbiA prenyltransferase family. Mg(2+) serves as cofactor.

Its subcellular location is the cell inner membrane. It catalyses the reaction all-trans-octaprenyl diphosphate + 4-hydroxybenzoate = 4-hydroxy-3-(all-trans-octaprenyl)benzoate + diphosphate. It functions in the pathway cofactor biosynthesis; ubiquinone biosynthesis. Functionally, catalyzes the prenylation of para-hydroxybenzoate (PHB) with an all-trans polyprenyl group. Mediates the second step in the final reaction sequence of ubiquinone-8 (UQ-8) biosynthesis, which is the condensation of the polyisoprenoid side chain with PHB, generating the first membrane-bound Q intermediate 3-octaprenyl-4-hydroxybenzoate. The chain is 4-hydroxybenzoate octaprenyltransferase from Thiobacillus denitrificans (strain ATCC 25259 / T1).